Consider the following 63-residue polypeptide: UPF0434 protein GDI0182/Gdia_2252 (63 aa).

It belongs to the UPF0434 family.

This chain is UPF0434 protein GDI0182/Gdia_2252, found in Gluconacetobacter diazotrophicus (strain ATCC 49037 / DSM 5601 / CCUG 37298 / CIP 103539 / LMG 7603 / PAl5).